We begin with the raw amino-acid sequence, 485 residues long: WD repeat-containing protein 13 (485 aa).

Met-1 is modified (N-acetylmethionine). Phosphoserine is present on residues Ser-70, Ser-74, and Ser-79. The residue at position 114 (Arg-114) is an Asymmetric dimethylarginine; alternate. Omega-N-methylarginine; alternate is present on Arg-114. WD repeat units follow at residues 162–202 (GMYH…LCQL), 208–246 (TVLR…IWAS), 250–290 (RCIR…VMNI), 295–335 (KVKG…LFDM), 341–389 (TKAK…VVDN), 394–438 (QLKR…FFDV), and 444–482 (AAVN…VWRR).

Widely expressed.

The protein localises to the nucleus. The polypeptide is WD repeat-containing protein 13 (WDR13) (Homo sapiens (Human)).